The following is a 374-amino-acid chain: uncharacterized protein (374 aa).

The interval 197–223 (GTTTTTNNNNNNNNNNNNNNNNGTNIT) is disordered. Residues 198–223 (TTTTTNNNNNNNNNNNNNNNNGTNIT) show a composition bias toward low complexity. Residues 302–342 (DEVSDCNDINTNLKKKRKQQEQLQIEKEKKLLTIQQEQTKI) adopt a coiled-coil conformation.

This is an uncharacterized protein from Dictyostelium discoideum (Social amoeba).